Consider the following 673-residue polypeptide: Chaperonin-containing T-complex member BBS12 (673 aa).

It belongs to the TCP-1 chaperonin family. BBS12 subfamily. In terms of assembly, component of the chaperonin-containing T-complex (TRiC), a heterooligomeric complex of about 850 to 900 kDa that forms two stacked rings, 12 to 16 nm in diameter.

It is found in the cell projection. It localises to the cilium. In terms of biological role, component of the chaperonin-containing T-complex (TRiC), a molecular chaperone complex that assists the folding of proteins upon ATP hydrolysis. This is Chaperonin-containing T-complex member BBS12 (bbs12) from Xenopus laevis (African clawed frog).